The following is an 805-amino-acid chain: Leucine--tRNA ligase (805 aa).

Residues 41–52 (PYPSGAGLHVGH) carry the 'HIGH' region motif. Residues 577 to 581 (KMSKS) carry the 'KMSKS' region motif. Residue K580 participates in ATP binding.

Belongs to the class-I aminoacyl-tRNA synthetase family.

Its subcellular location is the cytoplasm. The enzyme catalyses tRNA(Leu) + L-leucine + ATP = L-leucyl-tRNA(Leu) + AMP + diphosphate. This Staphylococcus aureus (strain JH1) protein is Leucine--tRNA ligase.